Consider the following 367-residue polypeptide: Eukaryotic translation initiation factor 3 subunit H (367 aa).

Residues 14–166 (VQVEALVVMK…LRAFRLSPNF (153 aa)) enclose the MPN domain.

It belongs to the eIF-3 subunit H family. Component of the eukaryotic translation initiation factor 3 (eIF-3) complex.

Its subcellular location is the cytoplasm. Functionally, component of the eukaryotic translation initiation factor 3 (eIF-3) complex, which is involved in protein synthesis of a specialized repertoire of mRNAs and, together with other initiation factors, stimulates binding of mRNA and methionyl-tRNAi to the 40S ribosome. The eIF-3 complex specifically targets and initiates translation of a subset of mRNAs involved in cell proliferation. This is Eukaryotic translation initiation factor 3 subunit H from Sclerotinia sclerotiorum (strain ATCC 18683 / 1980 / Ss-1) (White mold).